Reading from the N-terminus, the 367-residue chain is Aflatoxin B1 aldehyde reductase member 2 (367 aa).

Over residues 1–31 (MLRAASRAVGRAAVRSAQRSGTSVGRPLAMS) the composition is skewed to low complexity. The tract at residues 1 to 45 (MLRAASRAVGRAAVRSAQRSGTSVGRPLAMSRPPPPRAASGAPLR) is disordered. Residues 1–46 (MLRAASRAVGRAAVRSAQRSGTSVGRPLAMSRPPPPRAASGAPLRP) constitute a mitochondrion transit peptide. The residue at position 40 (S40) is a Phosphoserine. Residue T48 is modified to Phosphothreonine. An NADP(+)-binding site is contributed by D80. The active-site Proton donor is the Y85. Position 136 is an N6-acetyllysine (K136). H149 contacts substrate. NADP(+) is bound by residues 179 to 180 (SN), Q205, 234 to 244 (NPLAGGLLTGK), and R258. K244 carries the post-translational modification N6-succinyllysine. Residues Y268 and R271 each contribute to the substrate site. An NADP(+)-binding site is contributed by 326-334 (SSLEQLEQN). R367 contributes to the substrate binding site.

It belongs to the aldo/keto reductase family. Aldo/keto reductase 2 subfamily. In terms of assembly, homodimer. In terms of tissue distribution, expressed in liver, kidney, testis and brain with low levels in skeletal muscle, spleen, heart and lung.

The protein localises to the mitochondrion. The protein resides in the golgi apparatus. It localises to the cytoplasm. It catalyses the reaction 4-hydroxybutanoate + NADP(+) = succinate semialdehyde + NADPH + H(+). Its activity is regulated as follows. Inhibited by citrate, succinate and tartrate. In terms of biological role, catalyzes the NADPH-dependent reduction of succinic semialdehyde to gamma-hydroxybutyrate. May have an important role in producing the neuromodulator gamma-hydroxybutyrate (GHB). Has broad substrate specificity. Can reduce the dialdehyde protein-binding form of aflatoxin B1 (AFB1) to the non-binding AFB1 dialcohol. May be involved in protection of liver against the toxic and carcinogenic effects of AFB1, a potent hepatocarcinogen. In Mus musculus (Mouse), this protein is Aflatoxin B1 aldehyde reductase member 2.